The primary structure comprises 681 residues: Auxin response factor 8 (681 aa).

The TF-B3 DNA-binding region spans 120 to 222; it reads FAKTLTQSDA…DLHVGIRRAK (103 aa). Disordered stretches follow at residues 474–518 and 534–577; these read LRRP…AKPP and SLSG…TSSE. Polar residues-rich tracts occupy residues 534 to 555 and 564 to 577; these read SLSG…NTEK and GVIQ…TSSE. Positions 595 to 675 constitute a PB1 domain; sequence PGQCKVFIES…RRLTILTDAG (81 aa).

Belongs to the ARF family. Homodimers and heterodimers. As to expression, expressed in roots, culms, leaves and young panicles.

The protein localises to the nucleus. Auxin response factors (ARFs) are transcriptional factors that bind specifically to the DNA sequence 5'-TGTCTC-3' found in the auxin-responsive promoter elements (AuxREs). This Oryza sativa subsp. japonica (Rice) protein is Auxin response factor 8 (ARF8).